Consider the following 154-residue polypeptide: Transmembrane protein 35B (154 aa).

The first 22 residues, 1-22, serve as a signal peptide directing secretion; the sequence is MALLLSVLRVLLGGFFALVGLA. The next 3 helical transmembrane spans lie at 63 to 83, 85 to 105, and 112 to 132; these read IAVG…PPML, EISN…LAAL, and CIPA…QLLA.

Belongs to the DoxX family.

The protein localises to the membrane. The polypeptide is Transmembrane protein 35B (Homo sapiens (Human)).